Consider the following 101-residue polypeptide: Large ribosomal subunit protein bL21 (101 aa).

This sequence belongs to the bacterial ribosomal protein bL21 family. As to quaternary structure, part of the 50S ribosomal subunit. Contacts protein L20.

Its function is as follows. This protein binds to 23S rRNA in the presence of protein L20. In Anaeromyxobacter dehalogenans (strain 2CP-1 / ATCC BAA-258), this protein is Large ribosomal subunit protein bL21.